The primary structure comprises 204 residues: Translation initiation factor 2 subunit beta (204 aa).

One can recognise a TRAM domain in the interval 146-204 (AIEEGKELEVHIESISKKGDGVARIGKYILYVAGTKAGQNVKVRITRISGQVAFTQKIL).

Belongs to the eIF-2-beta/eIF-5 family. In terms of assembly, heterotrimer composed of an alpha, a beta and a gamma chain.

EIF-2 functions in the early steps of protein synthesis by forming a ternary complex with GTP and initiator tRNA. This is Translation initiation factor 2 subunit beta from Methanocorpusculum labreanum (strain ATCC 43576 / DSM 4855 / Z).